We begin with the raw amino-acid sequence, 421 residues long: 3-isopropylmalate dehydratase large subunit (421 aa).

[4Fe-4S] cluster is bound by residues Cys-300, Cys-360, and Cys-363.

The protein belongs to the aconitase/IPM isomerase family. LeuC type 2 subfamily. Heterodimer of LeuC and LeuD. It depends on [4Fe-4S] cluster as a cofactor.

It carries out the reaction (2R,3S)-3-isopropylmalate = (2S)-2-isopropylmalate. It functions in the pathway amino-acid biosynthesis; L-leucine biosynthesis; L-leucine from 3-methyl-2-oxobutanoate: step 2/4. Functionally, catalyzes the isomerization between 2-isopropylmalate and 3-isopropylmalate, via the formation of 2-isopropylmaleate. The chain is 3-isopropylmalate dehydratase large subunit from Lachnoclostridium phytofermentans (strain ATCC 700394 / DSM 18823 / ISDg) (Clostridium phytofermentans).